The chain runs to 125 residues: Small ribosomal subunit protein uS11 (125 aa).

It belongs to the universal ribosomal protein uS11 family. Part of the 30S ribosomal subunit. Interacts with proteins S7 and S18. Binds to IF-3.

In terms of biological role, located on the platform of the 30S subunit, it bridges several disparate RNA helices of the 16S rRNA. Forms part of the Shine-Dalgarno cleft in the 70S ribosome. In Coprothermobacter proteolyticus (strain ATCC 35245 / DSM 5265 / OCM 4 / BT), this protein is Small ribosomal subunit protein uS11.